Consider the following 1370-residue polypeptide: Putative Polycomb group protein ASXL2 (1370 aa).

Residues 11 to 86 form the HTH HARE-type domain; it reads RTWAEAAKTV…RMGVYTLKKD (76 aa). The disordered stretch occupies residues 92 to 216; that stretch reads KELSECSEES…DSVPAKPGQM (125 aa). Over residues 103–120 the composition is skewed to low complexity; the sequence is DGQSDSHSSDNSSSSDGG. Pro residues predominate over residues 141–152; the sequence is PPSPPSGCPSPT. Residue Ser150 is modified to Phosphoserine. Positions 178–182 match the Nuclear localization signal motif; sequence QQKKK. Polar residues predominate over residues 186–198; sequence CRPSMSISNQHLS. In terms of domain architecture, DEUBAD spans 229–338; the sequence is PDSILVNTNL…FENYYGQSSG (110 aa). Residues 258 to 262 carry the LXXLL motif motif; sequence LLLLL. Disordered stretches follow at residues 340–487 and 516–535; these read SLED…AGLQ and QESL…SSWE. Residues 398–412 are compositionally biased toward basic and acidic residues; sequence QKEENQDEARPDSKS. 4 positions are modified to phosphoserine: Ser477, Ser524, Ser553, and Ser590. Arg594 is modified (asymmetric dimethylarginine). Residue Ser601 is modified to Phosphoserine. Positions 643-652 are enriched in gly residues; sequence IPGPGPGGGQ. 3 disordered regions span residues 643–734, 805–891, and 1103–1175; these read IPGP…LASS, PKAG…SSIP, and GHAD…VSEQ. Composition is skewed to polar residues over residues 719–734 and 830–839; these read AQLQ…LASS and MTSSPVTTAS. Over residues 849 to 870 the composition is skewed to low complexity; that stretch reads SGTATSTGSAPSSSTLPAASSL. Over residues 871-891 the composition is skewed to polar residues; that stretch reads KTPGTSANMNGPISRTSSSIP. Acidic residues predominate over residues 1119-1131; it reads DESDEDRVGDEQE. Phosphoserine occurs at positions 1121 and 1254. The PHD-type; atypical zinc-finger motif lies at 1332 to 1369; it reads PSKCYCRLKAMIMCKGCGAFCHDDCIGPSKLCVSCLVV.

Belongs to the Asx family. In terms of assembly, core component of the polycomb repressive deubiquitinase (PR-DUB) complex, at least composed of BAP1, one of ASXL1, ASXL2 or (probably) ASXL3, and one of MBD5 or MBD6. Distinct combinations of ASXL and MBD proteins may preferentially bind specific histone modification marks. The PR-DUB core associates with a number of accessory proteins, including FOXK1, FOXK2, KDM1B, HCFC1 and OGT; KDM1B specifically associates with ASXL2 PR-DUB complexes. Interacts (via PHD domain) with MBD5 and MBD6 (via MBD domain); the interaction is probably direct and mediates association of MBD proteins with the PR-DUB core. Interacts with PPARA and PPARG.

It is found in the nucleus. Putative Polycomb group (PcG) protein. PcG proteins act by forming multiprotein complexes, which are required to maintain the transcriptionally repressive state of homeotic genes throughout development. PcG proteins are not required to initiate repression, but to maintain it during later stages of development. They probably act via methylation of histones, rendering chromatin heritably changed in its expressibility. Involved in transcriptional regulation mediated by ligand-bound nuclear hormone receptors, such as peroxisome proliferator-activated receptor gamma (PPARG). Acts as a coactivator for PPARG and enhances its adipocyte differentiation-inducing activity; the function seems to involve differential recruitment of acetylated and methylated histone H3. Non-catalytic component of the PR-DUB complex, a complex that specifically mediates deubiquitination of histone H2A monoubiquitinated at 'Lys-119' (H2AK119ub1). The PR-DUB complex is an epigenetic regulator of gene expression and acts as a transcriptional coactivator, affecting genes involved in development, cell communication, signaling, cell proliferation and cell viability. ASXL1, ASXL2 and ASXL3 function redundantly in the PR-DUB complex. The ASXL proteins are essential for chromatin recruitment and transcriptional activation of associated genes. ASXL1 and ASXL2 are important for BAP1 protein stability. The sequence is that of Putative Polycomb group protein ASXL2 (Asxl2) from Mus musculus (Mouse).